Reading from the N-terminus, the 205-residue chain is 3-demethoxyubiquinol 3-hydroxylase (205 aa).

The Fe cation site is built by Glu-54, Glu-84, His-87, Glu-136, Glu-168, and His-171.

Belongs to the COQ7 family. Fe cation serves as cofactor.

It is found in the cell membrane. The enzyme catalyses a 5-methoxy-2-methyl-3-(all-trans-polyprenyl)benzene-1,4-diol + AH2 + O2 = a 3-demethylubiquinol + A + H2O. It participates in cofactor biosynthesis; ubiquinone biosynthesis. Functionally, catalyzes the hydroxylation of 2-nonaprenyl-3-methyl-6-methoxy-1,4-benzoquinol during ubiquinone biosynthesis. This Delftia acidovorans (strain DSM 14801 / SPH-1) protein is 3-demethoxyubiquinol 3-hydroxylase.